The sequence spans 625 residues: Coagulation factor XI (625 aa).

A signal peptide spans Met-1–Gly-18. 4 consecutive Apple domains span residues Cys-20–Cys-103, Cys-110–Cys-193, Cys-200–Cys-283, and Cys-291–Cys-374. 17 disulfides stabilise this stretch: Cys-20/Cys-103, Cys-46/Cys-76, Cys-50/Cys-56, Cys-110/Cys-193, Cys-136/Cys-165, Cys-140/Cys-146, Cys-200/Cys-283, Cys-226/Cys-255, Cys-230/Cys-236, Cys-291/Cys-374, Cys-317/Cys-346, Cys-321/Cys-327, Cys-380/Cys-500, Cys-416/Cys-432, Cys-514/Cys-581, Cys-545/Cys-560, and Cys-571/Cys-599. 2 N-linked (GlcNAc...) asparagine glycosylation sites follow: Asn-90 and Asn-126. A Peptidase S1 domain is found at Ile-388–Gln-623. Residue His-431 is the Charge relay system of the active site. A glycan (N-linked (GlcNAc...) asparagine) is linked at Asn-450. Asp-480 (charge relay system) is an active-site residue. N-linked (GlcNAc...) asparagine glycosylation is present at Asn-491. Residue Ala-547–Arg-550 coordinates heparin. Ser-575 serves as the catalytic Charge relay system.

The protein belongs to the peptidase S1 family. Plasma kallikrein subfamily. Homodimer; disulfide-linked. After activation the heavy and light chains are also linked by a disulfide bond. Interacts (activated) with F9 (inactive and activated) in calcium-dependent manner. Forms a heterodimer with SERPINA5. Activated by factor XIIa (or XII), which cleaves each polypeptide after Arg-387 into the light chain, which contains the active site, and the heavy chain, which associates with high molecular weight (HMW) kininogen. Activated by F12 (activated); the presence of negatively charged surfaces accelerates activation. Activated by F2 (thrombin); the presence of negatively charged surfaces, such as polyphosphate and dextran sulfate, strongly accelerates activation. Autoactivated; the presence of negatively charged surfaces, such as polyphosphate and dextran sulfate, accelerates autoactivation and autolysis. In terms of processing, N-glycosylated on both chains. N-glycosylated sites mainly consist of nonfucosylated sialylated biantennary (in high abundance) and/or triantennary (in low abundance) complex structures.

Its subcellular location is the secreted. The catalysed reaction is Selective cleavage of Arg-|-Ala and Arg-|-Val bonds in factor IX to form factor IXa.. Inhibited by SERPINA5. Its function is as follows. Factor XI triggers the middle phase of the intrinsic pathway of blood coagulation by activating factor IX. This is Coagulation factor XI (F11) from Bos taurus (Bovine).